Consider the following 2130-residue polypeptide: Bromodomain adjacent to zinc finger domain protein 2B (2130 aa).

Disordered regions lie at residues 1–42 (MESG…TGAA), 82–118 (LFAPPAQNHDSTPFHPRTTGKNNRGSLEKGINGSLNG), 151–293 (GGRK…QKQP), 491–518 (KTTGNRTLVVPSTSPVLPGSGKDKPVSN), 543–633 (VDSD…SSIG), 756–790 (EGRRGRPPNPDRQHSREESRMRRRKGRPPNVGSTE), and 944–966 (RKKAEEKERLKQEKRDEKRLNKE). Positions 8-33 (TSSSVSSTAAASSPVSSTPSVASAVS) are enriched in low complexity. A compositionally biased stretch (low complexity) spans 183–206 (ESSSNSDSDSGSSSDTSSEGISSS). Acidic residues predominate over residues 207 to 234 (DSDDLEEDEEEEEDQSAEESEDDESDSE). Over residues 250–270 (GVKDMKTDGQKAHEKSQEKRT) the composition is skewed to basic and acidic residues. A compositionally biased stretch (polar residues) spans 272-283 (QQIPLVSDSQTH). Residues 284-293 (SSFQSQQKQP) are compositionally biased toward low complexity. The span at 492–505 (TTGNRTLVVPSTSP) shows a compositional bias: polar residues. The span at 543 to 554 (VDSDAPSSKESD) shows a compositional bias: basic and acidic residues. Positions 555-611 (DSNDDDDDDEDEDEDDEDDDSDDSQSESDSNSESDTDGSEDEDDEDDKDQDESDTDT) are enriched in acidic residues. Positions 623 to 633 (TGSSIKSSSIG) are enriched in low complexity. Positions 687–762 (VTDERELRVP…RAMEGRRGRP (76 aa)) constitute an MBD domain. Over residues 756 to 775 (EGRRGRPPNPDRQHSREESR) the composition is skewed to basic and acidic residues. A coiled-coil region spans residues 797–984 (AKLLRKLQAQ…ELEMAKELKK (188 aa)). A DDT domain is found at 1010–1075 (GSTFSDCLMI…VTAAVCDPGL (66 aa)). 4 disordered regions span residues 1186-1265 (TGKR…DQTV), 1431-1454 (SLCSLQPSVSQSSSEKSDSSNLFS), 1499-1545 (VTHV…PFAM), and 1773-1795 (HKKHDGDSAGGGEGSTSSLERKN). Residues 1220 to 1244 (SDYDDDDDDDSDDQADEDDEDEEDK) show a composition bias toward acidic residues. Residues 1245–1254 (EDKKGKKAEV) show a composition bias toward basic and acidic residues. A compositionally biased stretch (pro residues) spans 1514 to 1526 (SHPPSKSPSPVPS). The PHD-type zinc finger occupies 1895 to 1945 (KVYCQICRKGDNEELLLLCDGCDKGCHTYCHRPKITTIPDGDWFCPACIAK). A disordered region spans residues 1957 to 2019 (QIKGKKSNEQ…KQENFTAIKK (63 aa)). A compositionally biased stretch (basic and acidic residues) spans 1991 to 2002 (GKTEPKKRKMDE). Polar residues predominate over residues 2004 to 2014 (VSVSQGKQENF). One can recognise a Bromo domain in the interval 2022-2126 (RDDSKDLAIC…KYFEKKWTEI (105 aa)).

It belongs to the WAL family.

The protein localises to the nucleus. In terms of biological role, regulatory subunit of the ATP-dependent BRF-1 and BRF-5 ISWI chromatin remodeling complexes, which form ordered nucleosome arrays on chromatin and facilitate access to DNA during DNA-templated processes such as DNA replication, transcription, and repair. Both complexes regulate the spacing of nucleosomes along the chromatin and have the ability to slide mononucleosomes to the center of a DNA template. The BRF-1 ISWI chromatin remodeling complex has a lower ATP hydrolysis rate than the BRF-5 ISWI chromatin remodeling complex. Chromatin reader protein. Represses the expression of mitochondrial function-related genes, perhaps by transcriptional regulation. This is Bromodomain adjacent to zinc finger domain protein 2B (BAZ2B) from Gallus gallus (Chicken).